Here is a 155-residue protein sequence, read N- to C-terminus: Interleukin-36 receptor antagonist protein (155 aa).

Cys-8 and Cys-154 are disulfide-bonded.

This sequence belongs to the IL-1 family. Interacts with cargo receptor TMED10; the interaction mediates the translocation from the cytoplasm into the ERGIC (endoplasmic reticulum-Golgi intermediate compartment) and thereby secretion. In terms of tissue distribution, predominantly expressed in skin keratinocytes but not in fibroblasts, endothelial cells or melanocytes. Detected also in the spleen, brain leukocyte and macrophage cell types. Increased in lesional psoriasis skin.

The protein resides in the cytoplasm. Its subcellular location is the secreted. Its function is as follows. Inhibits the activity of interleukin-36 (IL36A,IL36B and IL36G) by binding to receptor IL1RL2 and preventing its association with the coreceptor IL1RAP for signaling. Part of the IL-36 signaling system that is thought to be present in epithelial barriers and to take part in local inflammatory response; similar to the IL-1 system with which it shares the coreceptor. Proposed to play a role in skin inflammation. May be involved in the innate immune response to fungal pathogens, such as Aspergillus fumigatus. May activate an anti-inflammatory signaling pathway by recruiting SIGIRR. The chain is Interleukin-36 receptor antagonist protein from Homo sapiens (Human).